The primary structure comprises 459 residues: Cyclin-dependent kinase F-4 (459 aa).

The Protein kinase domain occupies 4–283 (FKMIKEVGDG…AAEVLQHTFF (280 aa)). ATP contacts are provided by residues 10 to 18 (VGDGTFGSV) and K33. D125 serves as the catalytic Proton acceptor. S151 is subject to Phosphoserine. At T156 the chain carries Phosphothreonine. The disordered stretch occupies residues 310-397 (KGVSEHGMPR…RHSRSLPETG (88 aa)). Composition is skewed to polar residues over residues 322–346 (STGT…SKTG) and 366–375 (ESNNKLTTNR).

The protein belongs to the protein kinase superfamily. CMGC Ser/Thr protein kinase family. CDC2/CDKX subfamily.

The enzyme catalyses L-seryl-[protein] + ATP = O-phospho-L-seryl-[protein] + ADP + H(+). The catalysed reaction is L-threonyl-[protein] + ATP = O-phospho-L-threonyl-[protein] + ADP + H(+). It carries out the reaction [DNA-directed RNA polymerase] + ATP = phospho-[DNA-directed RNA polymerase] + ADP + H(+). This chain is Cyclin-dependent kinase F-4 (CDKF-4), found in Oryza sativa subsp. japonica (Rice).